A 366-amino-acid polypeptide reads, in one-letter code: NADH-quinone oxidoreductase subunit D (366 aa).

This sequence belongs to the complex I 49 kDa subunit family. In terms of assembly, NDH-1 is composed of 14 different subunits. Subunits NuoB, C, D, E, F, and G constitute the peripheral sector of the complex.

It localises to the cell membrane. It carries out the reaction a quinone + NADH + 5 H(+)(in) = a quinol + NAD(+) + 4 H(+)(out). In terms of biological role, NDH-1 shuttles electrons from NADH, via FMN and iron-sulfur (Fe-S) centers, to quinones in the respiratory chain. The immediate electron acceptor for the enzyme in this species is believed to be a menaquinone. Couples the redox reaction to proton translocation (for every two electrons transferred, four hydrogen ions are translocated across the cytoplasmic membrane), and thus conserves the redox energy in a proton gradient. The polypeptide is NADH-quinone oxidoreductase subunit D (Geobacillus thermodenitrificans (strain NG80-2)).